The sequence spans 582 residues: Semenogelin-2 (582 aa).

The first 23 residues, 1–23 (MKSIILFVLSLLLILEKQAAVMG), serve as a signal peptide directing secretion. Disordered stretches follow at residues 25–62 (KGGS…SKGS), 131–156 (KGGQ…KGIF), 173–192 (KEQA…GSQS), 272–477 (NLNQ…EQRQ), and 502–554 (VEGK…SGAH). A compositionally biased stretch (basic and acidic residues) spans 50 to 59 (GQKDKQHTES). 2 stretches are compositionally biased toward polar residues: residues 137-151 (HGTQ…NSPS) and 174-192 (EQAS…GSQS). Residues 292 to 310 (RTEERQLNHGEKSVQKDVS) show a composition bias toward basic and acidic residues. Over residues 325-335 (KSQNQVTIPSQ) the composition is skewed to polar residues. Over residues 336–345 (DQEHGHKENK) the composition is skewed to basic and acidic residues. Positions 385–395 (KSQNQVTIPSQ) are enriched in polar residues. Positions 396–405 (DQEHGHKENK) are enriched in basic and acidic residues. A compositionally biased stretch (polar residues) spans 445–455 (KSQNQVTIPSQ). The span at 456–465 (DQEHGHKENK) shows a compositional bias: basic and acidic residues. Polar residues-rich tracts occupy residues 466 to 477 (ISYQSSSTEQRQ) and 506 to 529 (SQIQ…NSGK). The span at 537-546 (LLSHEQEGRY) shows a compositional bias: basic and acidic residues.

Belongs to the semenogelin family. In terms of assembly, interacts with SERPINA5.

It localises to the secreted. Functionally, participates in the formation of a gel matrix (sperm coagulum) entrapping the accessory gland secretions and ejaculated spermatozoa. This is Semenogelin-2 (SEMG2) from Macaca nemestrina (Pig-tailed macaque).